Consider the following 245-residue polypeptide: tRNA pseudouridine synthase A (245 aa).

D52 serves as the catalytic Nucleophile. Y111 is a substrate binding site.

Belongs to the tRNA pseudouridine synthase TruA family. In terms of assembly, homodimer.

It catalyses the reaction uridine(38/39/40) in tRNA = pseudouridine(38/39/40) in tRNA. In terms of biological role, formation of pseudouridine at positions 38, 39 and 40 in the anticodon stem and loop of transfer RNAs. This Bradyrhizobium diazoefficiens (strain JCM 10833 / BCRC 13528 / IAM 13628 / NBRC 14792 / USDA 110) protein is tRNA pseudouridine synthase A.